A 37-amino-acid polypeptide reads, in one-letter code: Potassium channel toxin alpha-KTx 11.1 (37 aa).

3 disulfides stabilise this stretch: Cys8-Cys27, Cys13-Cys33, and Cys17-Cys35.

This sequence belongs to the short scorpion toxin superfamily. Potassium channel inhibitor family. Alpha-KTx 11 subfamily. In terms of tissue distribution, expressed by the venom gland.

It is found in the secreted. Functionally, binds and inhibits voltage-sensitive potassium channels. Inhibits the vertebrate potassium channels Kv1.1/KCNA1, Kv1.2/KCNA2 and Kv1.3/KCNA3 with low affinity. Also weakly inhibits Kv7.1/KCNQ1 (10 uM of the toxin inhibits currents by 21.43%). The chain is Potassium channel toxin alpha-KTx 11.1 from Parabuthus villosus (Black hairy thick-tailed scorpion).